Consider the following 730-residue polypeptide: Envelope glycoprotein H (730 aa).

A signal peptide spans 1–21 (MQGLAFLAALACWRCISLTCG). The Virion surface portion of the chain corresponds to 22–706 (ATGALPTTAT…MYRRRAASAL (685 aa)). N-linked (GlcNAc...) asparagine; by host glycosylation is found at Asn46, Asn54, Asn101, Asn125, Asn131, Asn188, Asn209, Asn215, Asn267, Asn274, Asn365, Asn556, Asn613, Asn626, and Asn688. Residues 190–254 (SGVALYGVVS…RNAKYALVAI (65 aa)) are interaction with gL. The helical transmembrane segment at 707-727 (FLILSFIGFSGVIYFLYRLFS) threads the bilayer. Residues 728–730 (ILY) are Intravirion-facing.

Belongs to the herpesviridae glycoprotein H family. In terms of assembly, interacts with glycoprotein L (gL); this interaction is necessary for the correct processing and cell surface expression of gH. The heterodimer gH/gL seems to interact with gB trimers during fusion. When in complex with gL, interacts with host EPHA2; this interaction triggers EPHA2 phosphorylation and endocytosis allowing KSHV entry. N-glycosylated, O-glycosylated, and sialylated.

It is found in the virion membrane. The protein localises to the host cell membrane. Its subcellular location is the host endosome membrane. The heterodimer glycoprotein H-glycoprotein L is required for the fusion of viral and plasma membranes leading to virus entry into the host cell. Following initial binding to host receptor, membrane fusion is mediated by the fusion machinery composed of gB and the heterodimer gH/gL. May also be involved in the fusion between the virion envelope and the outer nuclear membrane during virion morphogenesis. Targets host EPHA2 to promote KSHV entry. The protein is Envelope glycoprotein H of Homo sapiens (Human).